The primary structure comprises 1703 residues: Ferlin 2 (1703 aa).

2 C2 domains span residues 18–141 (IRKL…KTWL) and 207–332 (KQPV…FRWF). 3 disordered regions span residues 913–937 (NQFNDDDEGDNEDEQDSRENDFDDN), 970–1025 (NLDK…TSST), and 1194–1228 (KNKSNRSSMSLSMRSSIQSNTFKSSRKTSRSQKLG). The span at 916-928 (NDDDEGDNEDEQD) shows a compositional bias: acidic residues. Residues 979–991 (QPQSLKNLQNLDS) are compositionally biased toward polar residues. A compositionally biased stretch (basic and acidic residues) spans 993–1009 (SKADQKSQFDLKSESKS). Positions 1198-1209 (NRSSMSLSMRSS) are enriched in low complexity. One can recognise a C2 3 domain in the interval 1466 to 1595 (VARIIPPSTI…LKKLKEGIVF (130 aa)). The interval 1628–1651 (AAESDPVGEGQNEPNKDPILEKPK) is disordered. Residues 1641–1651 (PNKDPILEKPK) show a composition bias toward basic and acidic residues. Residues 1681 to 1701 (FAGIFVSIVTMMILFVKPGIL) form a helical membrane-spanning segment.

This sequence belongs to the ferlin family.

It localises to the membrane. Its function is as follows. Regulates mucocyst exocytosis. The sequence is that of Ferlin 2 from Tetrahymena thermophila (strain SB210).